Consider the following 253-residue polypeptide: Triosephosphate isomerase (253 aa).

Substrate is bound at residue 8-10 (NWK). The active-site Electrophile is the His93. Glu165 acts as the Proton acceptor in catalysis. Residues Gly171, Ser210, and 231–232 (GG) each bind substrate.

Belongs to the triosephosphate isomerase family. In terms of assembly, homodimer.

It is found in the cytoplasm. The enzyme catalyses D-glyceraldehyde 3-phosphate = dihydroxyacetone phosphate. The protein operates within carbohydrate biosynthesis; gluconeogenesis. It participates in carbohydrate degradation; glycolysis; D-glyceraldehyde 3-phosphate from glycerone phosphate: step 1/1. Its function is as follows. Involved in the gluconeogenesis. Catalyzes stereospecifically the conversion of dihydroxyacetone phosphate (DHAP) to D-glyceraldehyde-3-phosphate (G3P). The chain is Triosephosphate isomerase from Francisella tularensis subsp. tularensis (strain FSC 198).